The following is a 655-amino-acid chain: uncharacterized protein (655 aa).

The helical transmembrane segment at 5–25 (IIIIIFIVINFINIIISSITF) threads the bilayer. Disordered regions lie at residues 337–363 (NSDYNNNNNNNNNNNNNNNNNNNNNNN) and 484–525 (DKIG…SDNS). The segment covering 515–524 (DNNSIGSSDN) has biased composition (low complexity). A helical membrane pass occupies residues 588-608 (ILAVTISAIGIICVALLLTVV).

The protein resides in the membrane. This is an uncharacterized protein from Dictyostelium discoideum (Social amoeba).